The chain runs to 549 residues: Pyrophosphate--fructose 6-phosphate 1-phosphotransferase (549 aa).

Gly78 is a diphosphate binding site. Asp172 is a binding site for Mg(2+). Substrate is bound by residues 200-202 (TID), 239-240 (KY), 247-249 (MGR), Glu308, and 421-424 (YEGR). Asp202 acts as the Proton acceptor in catalysis.

This sequence belongs to the phosphofructokinase type A (PFKA) family. PPi-dependent PFK group II subfamily. Clade 'Long' sub-subfamily. In terms of assembly, homodimer. Requires Mg(2+) as cofactor.

It localises to the cytoplasm. It carries out the reaction beta-D-fructose 6-phosphate + diphosphate = beta-D-fructose 1,6-bisphosphate + phosphate + H(+). Its pathway is carbohydrate degradation; glycolysis; D-glyceraldehyde 3-phosphate and glycerone phosphate from D-glucose: step 3/4. With respect to regulation, non-allosteric. Its function is as follows. Catalyzes the phosphorylation of D-fructose 6-phosphate, the first committing step of glycolysis. Uses inorganic phosphate (PPi) as phosphoryl donor instead of ATP like common ATP-dependent phosphofructokinases (ATP-PFKs), which renders the reaction reversible, and can thus function both in glycolysis and gluconeogenesis. Consistently, PPi-PFK can replace the enzymes of both the forward (ATP-PFK) and reverse (fructose-bisphosphatase (FBPase)) reactions. In Porphyromonas gingivalis (Bacteroides gingivalis), this protein is Pyrophosphate--fructose 6-phosphate 1-phosphotransferase.